The chain runs to 504 residues: Peroxisome proliferator-activated receptor gamma (504 aa).

S111 carries the phosphoserine; by MAPK modification. A DNA-binding region (nuclear receptor) is located at residues 135–209 (AIECRVCGDK…VGMSHNAIRF (75 aa)). 2 NR C4-type zinc fingers span residues 138-158 (CRVC…CEGC) and 175-197 (CDLN…FQKC). Positions 204–279 (HNAIRFGRMP…DKSPFVIYDM (76 aa)) are interaction with FAM120B. One can recognise an NR LBD domain in the interval 237–502 (DLRALAKHLY…HPLLQEIYKD (266 aa)). K251 participates in a covalent cross-link: Glycyl lysine isopeptide (Lys-Gly) (interchain with G-Cter in ubiquitin). Positions 494 to 502 (PLLQEIYKD) match the 9aaTAD motif.

It belongs to the nuclear hormone receptor family. NR1 subfamily. In terms of assembly, interacts with FOXO1 (acetylated form). Heterodimer with other nuclear receptors, such as RXRA. The heterodimer with the retinoic acid receptor RXRA is called adipocyte-specific transcription factor ARF6. Interacts with NCOA6 coactivator, leading to a strong increase in transcription of target genes. Interacts with coactivator PPARBP, leading to a mild increase in transcription of target genes. Interacts with NOCA7 in a ligand-inducible manner. Interacts with NCOA1 and NCOA2 LXXLL motifs. Interacts with ASXL1, ASXL2, DNTTIP2, FAM120B, MAP2K1/MEK1, NR0B2, PDPK1, PRDM16, PRMT2 and TGFB1I1. Interacts (when activated by agonist) with PPP5C. Interacts with HELZ2 and THRAP3; the interaction stimulates the transcriptional activity of PPARG. Interacts with PER2, the interaction is ligand dependent and blocks PPARG recruitment to target promoters. Interacts with NOCT. Interacts with ACTN4. Interacts (when in the liganded conformation) with GPS2. Interacts with CRY1 and CRY2 in a ligand-dependent manner. In the absence of hormonal ligand, interacts with TACC1. In macrophages, interacts with PAQR3 and STUB1; the interactions promote PPARG poylubiquitination and STUB1-mediated degradation. In terms of processing, phosphorylated at basal conditions and dephosphorylated when treated with the ligand. May be dephosphorylated by PPP5C. The phosphorylated form may be inactive and dephosphorylation induces adipogenic activity. Post-translationally, ubiquitinated by E3 ubiquitin-protein ligase complex containing FBXO9; leading to proteasomal degradation. Ubiquitinated at Lys-251 by TRIM55 leading to proteasomal degradation. Ubiquitinated by E3 ubiquitin-protein ligase STUB1/CHIP; leading to proteasomal degradation. Highest expression in adipose tissue and lower in spleen. Very low levels in kidney, intestine, lung and muscle.

It localises to the nucleus. The protein localises to the cytoplasm. With respect to regulation, PDPK1 activates its transcriptional activity independently of its kinase activity. In terms of biological role, nuclear receptor that binds peroxisome proliferators such as hypolipidemic drugs and fatty acids. Once activated by a ligand, the nuclear receptor binds to DNA specific PPAR response elements (PPRE) and modulates the transcription of its target genes, such as acyl-CoA oxidase. It therefore controls the peroxisomal beta-oxidation pathway of fatty acids. Key regulator of adipocyte differentiation and glucose homeostasis. ARF6 acts as a key regulator of the tissue-specific adipocyte P2 (aP2) enhancer. Acts as a critical regulator of gut homeostasis by suppressing NF-kappa-B-mediated pro-inflammatory responses. Plays a role in the regulation of cardiovascular circadian rhythms by regulating the transcription of BMAL1 in the blood vessels. This Sus scrofa (Pig) protein is Peroxisome proliferator-activated receptor gamma (PPARG).